Reading from the N-terminus, the 180-residue chain is ATP-dependent protease subunit HslV (180 aa).

The active site involves T5. 3 residues coordinate Na(+): G161, C164, and T167.

Belongs to the peptidase T1B family. HslV subfamily. As to quaternary structure, a double ring-shaped homohexamer of HslV is capped on each side by a ring-shaped HslU homohexamer. The assembly of the HslU/HslV complex is dependent on binding of ATP.

It localises to the cytoplasm. It carries out the reaction ATP-dependent cleavage of peptide bonds with broad specificity.. Allosterically activated by HslU binding. Protease subunit of a proteasome-like degradation complex believed to be a general protein degrading machinery. In Campylobacter jejuni subsp. doylei (strain ATCC BAA-1458 / RM4099 / 269.97), this protein is ATP-dependent protease subunit HslV.